We begin with the raw amino-acid sequence, 430 residues long: Trigger factor (430 aa).

One can recognise a PPIase FKBP-type domain in the interval 163 to 248 (GNIAIIDFKG…VKEIKVKEIP (86 aa)).

This sequence belongs to the FKBP-type PPIase family. Tig subfamily.

The protein localises to the cytoplasm. It carries out the reaction [protein]-peptidylproline (omega=180) = [protein]-peptidylproline (omega=0). Involved in protein export. Acts as a chaperone by maintaining the newly synthesized protein in an open conformation. Functions as a peptidyl-prolyl cis-trans isomerase. In Clostridium kluyveri (strain NBRC 12016), this protein is Trigger factor.